Here is an 839-residue protein sequence, read N- to C-terminus: LPS-assembly protein LptD (839 aa).

The N-terminal stretch at 1-21 is a signal peptide; it reads MAIGITACVLSLINYQGLAYS.

This sequence belongs to the LptD family. In terms of assembly, component of the lipopolysaccharide transport and assembly complex. Interacts with LptE and LptA.

It is found in the cell outer membrane. Its function is as follows. Together with LptE, is involved in the assembly of lipopolysaccharide (LPS) at the surface of the outer membrane. This chain is LPS-assembly protein LptD, found in Legionella pneumophila (strain Lens).